Reading from the N-terminus, the 282-residue chain is Putative dolichyldiphosphatase (282 aa).

A run of 2 helical transmembrane segments spans residues 26–46 and 93–113; these read LLCAWLALVPQALCVVYATLI and MPSSHAQFVSFWAVALGLFLL. Residues 121–153 form a disordered region; the sequence is QQQQQQQKQKQRERKKQVTNVKTTTTNGSGNGS. Low complexity predominate over residues 138 to 148; it reads VTNVKTTTTNG. Transmembrane regions (helical) follow at residues 173 to 193 and 207 to 227; these read WSFAHRFVASLGALVLAGAVA and VLVGCGAGTLCAVAWFVVTHV.

This sequence belongs to the dolichyldiphosphatase family.

Its subcellular location is the endoplasmic reticulum membrane. The enzyme catalyses a di-trans,poly-cis-dolichyl diphosphate + H2O = a di-trans,poly-cis-dolichyl phosphate + phosphate + H(+). It participates in protein modification; protein glycosylation. This is Putative dolichyldiphosphatase from Neurospora crassa (strain ATCC 24698 / 74-OR23-1A / CBS 708.71 / DSM 1257 / FGSC 987).